A 260-amino-acid polypeptide reads, in one-letter code: uncharacterized protein (260 aa).

Belongs to the methyltransferase superfamily.

The protein resides in the cytoplasm. It localises to the nucleus. Probable methyltransferase. This is an uncharacterized protein from Schizosaccharomyces pombe (strain 972 / ATCC 24843) (Fission yeast).